Reading from the N-terminus, the 301-residue chain is Acetylglutamate kinase (301 aa).

Residues Gly70 to Gly71, Arg92, and Asn185 contribute to the substrate site.

It belongs to the acetylglutamate kinase family. ArgB subfamily.

Its subcellular location is the cytoplasm. It carries out the reaction N-acetyl-L-glutamate + ATP = N-acetyl-L-glutamyl 5-phosphate + ADP. Its pathway is amino-acid biosynthesis; L-arginine biosynthesis; N(2)-acetyl-L-ornithine from L-glutamate: step 2/4. In terms of biological role, catalyzes the ATP-dependent phosphorylation of N-acetyl-L-glutamate. In Synechococcus elongatus (strain ATCC 33912 / PCC 7942 / FACHB-805) (Anacystis nidulans R2), this protein is Acetylglutamate kinase.